The primary structure comprises 318 residues: MGRDNDQKKNKKKRNRSNENEKSVEKVVANEEKVPTQQKQKQQQGQQGNCNQSKKKKNQEVYPFGNYRNYYGYRISNDTDEDPRLKVLKKEWFEGKDCLDIGCNSGIMTIHIAKKFGCRSILGVDIDTSRIEDAHWHLRKFVRMQNSTKPSEKKSSSEGADGVHGSKEPSVSLSNGEAKADSAETKDLSQIVSFQKENFVQTRNLDDNRYDTILCLSVTKWVHLNWGDDGLITLFSKIWRLLQPGGIFVMEPQPWKSYENNRRVSETTAMNYRTIVLRPDRFQEILLDKIGFRTVEDLTSSLSGASKGFDRQILAFQK.

2 disordered regions span residues 1–61 (MGRD…NQEV) and 146–184 (NSTKPSEKKSSSEGADGVHGSKEPSVSLSNGEAKADSAE). Residues 16-34 (RSNENEKSVEKVVANEEKV) are compositionally biased toward basic and acidic residues. Over residues 37 to 52 (QQKQKQQQGQQGNCNQ) the composition is skewed to low complexity. A Bin3-type SAM domain is found at 82 to 318 (DPRLKVLKKE…FDRQILAFQK (237 aa)).

It belongs to the methyltransferase superfamily.

In terms of biological role, probable RNA methyltransferase. In Arabidopsis thaliana (Mouse-ear cress), this protein is Probable RNA methyltransferase At5g51130.